A 124-amino-acid polypeptide reads, in one-letter code: MAETSTSQSAAPDTGTYAIVEASGQQFWLQPNRYYDLDRLQADVDATVTLDNVLLVKDATGTTLGKPYVKDASVELKVMAHRRGPKVIVYKMRPKKKTRRKNGHRQELTRVMVQSISVGGKSIS.

This sequence belongs to the bacterial ribosomal protein bL21 family. In terms of assembly, part of the 50S ribosomal subunit. Contacts protein L20.

Functionally, this protein binds to 23S rRNA in the presence of protein L20. The protein is Large ribosomal subunit protein bL21 of Synechococcus sp. (strain WH7803).